The primary structure comprises 155 residues: Endoribonuclease YbeY (155 aa).

Residues histidine 114, histidine 118, and histidine 124 each coordinate Zn(2+).

Belongs to the endoribonuclease YbeY family. Zn(2+) serves as cofactor.

Its subcellular location is the cytoplasm. Its function is as follows. Single strand-specific metallo-endoribonuclease involved in late-stage 70S ribosome quality control and in maturation of the 3' terminus of the 16S rRNA. The protein is Endoribonuclease YbeY of Escherichia coli O81 (strain ED1a).